The following is a 20-amino-acid chain: Juvenile hormone-binding protein (20 aa).

The protein resides in the secreted. Functionally, prevents juvenile hormone from being hydrolyzed by general esterases by combining with it specifically. The polypeptide is Juvenile hormone-binding protein (JHBP) (Bombyx mori (Silk moth)).